The following is a 329-amino-acid chain: Aspartate--ammonia ligase (329 aa).

It belongs to the class-II aminoacyl-tRNA synthetase family. AsnA subfamily.

The protein resides in the cytoplasm. It carries out the reaction L-aspartate + NH4(+) + ATP = L-asparagine + AMP + diphosphate + H(+). Its pathway is amino-acid biosynthesis; L-asparagine biosynthesis; L-asparagine from L-aspartate (ammonia route): step 1/1. The polypeptide is Aspartate--ammonia ligase (Ureaplasma parvum serovar 3 (strain ATCC 27815 / 27 / NCTC 11736)).